The chain runs to 207 residues: MTEYEYRVGDTDAGLAPAGIDQPRIEKAVREILLAIGEDPDRDGLVETPARVARAFAEQFAGLSQRPEDVLTTVFEANHEEMVLVKDIELYSTCEHHLVPFYGAAHVGYIPNTDGRITGLSKLARLVDIYARRPQVQERLTSQVADALMERLEPRGVIVVVEAEHLCMTMRGVRKPGAKTVTSAVRGAFRESYKTRAEAMDLILGRR.

Zn(2+) contacts are provided by Cys-94, His-97, and Cys-167.

It belongs to the GTP cyclohydrolase I family. In terms of assembly, toroid-shaped homodecamer, composed of two pentamers of five dimers.

It carries out the reaction GTP + H2O = 7,8-dihydroneopterin 3'-triphosphate + formate + H(+). It functions in the pathway cofactor biosynthesis; 7,8-dihydroneopterin triphosphate biosynthesis; 7,8-dihydroneopterin triphosphate from GTP: step 1/1. This is GTP cyclohydrolase 1 from Thermobifida fusca (strain YX).